Consider the following 376-residue polypeptide: Chaperone protein DnaJ 2 (376 aa).

Residues 8–72 (DYYEILGVPR…EKRKLYDMYG (65 aa)) form the J domain. The CR-type zinc-finger motif lies at 143–219 (GTTVPIEVER…CTGRGYGLVK (77 aa)). C156, C159, C172, C175, C194, C197, C207, and C210 together coordinate Zn(2+). 4 CXXCXGXG motif repeats span residues 156 to 163 (CSACGGTG), 172 to 179 (CPTCGGRG), 194 to 201 (CPTCGGEG), and 207 to 214 (CHACTGRG).

It belongs to the DnaJ family. Homodimer. It depends on Zn(2+) as a cofactor.

It is found in the cytoplasm. Its function is as follows. Participates actively in the response to hyperosmotic and heat shock by preventing the aggregation of stress-denatured proteins and by disaggregating proteins, also in an autonomous, DnaK-independent fashion. Unfolded proteins bind initially to DnaJ; upon interaction with the DnaJ-bound protein, DnaK hydrolyzes its bound ATP, resulting in the formation of a stable complex. GrpE releases ADP from DnaK; ATP binding to DnaK triggers the release of the substrate protein, thus completing the reaction cycle. Several rounds of ATP-dependent interactions between DnaJ, DnaK and GrpE are required for fully efficient folding. Also involved, together with DnaK and GrpE, in the DNA replication of plasmids through activation of initiation proteins. The sequence is that of Chaperone protein DnaJ 2 from Aquifex aeolicus (strain VF5).